The sequence spans 110 residues: Small nuclear ribonucleoprotein Sm D2 (110 aa).

Residues 31–110 form the Sm domain; sequence MSLINDAMVT…VIVVLKTPVE (80 aa).

This sequence belongs to the snRNP core protein family. As to quaternary structure, component of the Sm core complex, present in spliceosomal snRNP U1, U2, U4/U6 and U5. The core complex contains SMB1, SMD1, SMD2, SMD3, SME1, SMX3 and SMX2 (Sm proteins B, D1, D2, D3, E, F and G, respectively), and is probably a heptameric ring structure. Belongs to the CWC complex (or CEF1-associated complex), a spliceosome sub-complex reminiscent of a late-stage spliceosome composed of the U2, U5 and U6 snRNAs and at least BUD13, BUD31, BRR2, CDC40, CEF1, CLF1, CUS1, CWC2, CWC15, CWC21, CWC22, CWC23, CWC24, CWC25, CWC27, ECM2, HSH155, IST3, ISY1, LEA1, MSL1, NTC20, PRP8, PRP9, PRP11, PRP19, PRP21, PRP22, PRP45, PRP46, SLU7, SMB1, SMD1, SMD2, SMD3, SMX2, SMX3, SNT309, SNU114, SPP2, SYF1, SYF2, RSE1 and YJU2. Component of the U4/U6-U5 tri-snRNP complex composed of the U4, U6 and U5 snRNAs and at least PRP3, PRP4, PRP6, PRP8, PRP18, PRP31, PRP38, SNU13, SNU23, SNU66, SNU114, SPP381, SMB1, SMD1, SMD2, SMD3, SMX2, SMX3, LSM2, LSM3, LSM4, LSM5, LSM6, LSM7, LSM8, BRR2 and DIB1.

The protein localises to the nucleus. It localises to the cytoplasm. Its subcellular location is the cytosol. Its function is as follows. Plays a role in pre-mRNA splicing as a core component of the spliceosomal U1, U2, U4 and U5 small nuclear ribonucleoproteins (snRNPs), the building blocks of the spliceosome. This Saccharomyces cerevisiae (strain ATCC 204508 / S288c) (Baker's yeast) protein is Small nuclear ribonucleoprotein Sm D2 (SMD2).